Here is a 330-residue protein sequence, read N- to C-terminus: Ribosomal RNA small subunit methyltransferase C (330 aa).

Belongs to the methyltransferase superfamily. RsmC family. In terms of assembly, monomer.

It is found in the cytoplasm. The enzyme catalyses guanosine(1207) in 16S rRNA + S-adenosyl-L-methionine = N(2)-methylguanosine(1207) in 16S rRNA + S-adenosyl-L-homocysteine + H(+). Specifically methylates the guanine in position 1207 of 16S rRNA in the 30S particle. In Haemophilus influenzae (strain PittEE), this protein is Ribosomal RNA small subunit methyltransferase C.